A 325-amino-acid chain; its full sequence is Tetraacyldisaccharide 4'-kinase (325 aa).

An ATP-binding site is contributed by 55–62; it reads TAGGNGKT.

It belongs to the LpxK family.

It carries out the reaction a lipid A disaccharide + ATP = a lipid IVA + ADP + H(+). Its pathway is glycolipid biosynthesis; lipid IV(A) biosynthesis; lipid IV(A) from (3R)-3-hydroxytetradecanoyl-[acyl-carrier-protein] and UDP-N-acetyl-alpha-D-glucosamine: step 6/6. Functionally, transfers the gamma-phosphate of ATP to the 4'-position of a tetraacyldisaccharide 1-phosphate intermediate (termed DS-1-P) to form tetraacyldisaccharide 1,4'-bis-phosphate (lipid IVA). The protein is Tetraacyldisaccharide 4'-kinase of Salmonella heidelberg (strain SL476).